Here is a 120-residue protein sequence, read N- to C-terminus: Large ribosomal subunit protein uL14 (120 aa).

This sequence belongs to the universal ribosomal protein uL14 family. As to quaternary structure, part of the 50S ribosomal subunit. Forms a cluster with proteins L3 and L19. In the 70S ribosome, L14 and L19 interact and together make contacts with the 16S rRNA in bridges B5 and B8.

Binds to 23S rRNA. Forms part of two intersubunit bridges in the 70S ribosome. The protein is Large ribosomal subunit protein uL14 of Dictyoglomus turgidum (strain DSM 6724 / Z-1310).